Reading from the N-terminus, the 137-residue chain is Large ribosomal subunit protein uL16 (137 aa).

It belongs to the universal ribosomal protein uL16 family. In terms of assembly, part of the 50S ribosomal subunit.

Binds 23S rRNA and is also seen to make contacts with the A and possibly P site tRNAs. The protein is Large ribosomal subunit protein uL16 of Stenotrophomonas maltophilia (strain K279a).